The following is a 69-amino-acid chain: Cytochrome c oxidase subunit 8A, mitochondrial (69 aa).

The N-terminal 25 residues, 1–25, are a transit peptide targeting the mitochondrion; sequence MSVLTPLLLRGLTGSARRLPVPRAK. Positions 2 to 19 match the SIFI-degron motif; it reads SVLTPLLLRGLTGSARRL. The Mitochondrial matrix segment spans residues 26–36; it reads IHSLPPDEKLG. A helical membrane pass occupies residues 37-60; the sequence is IMELAVGLTSCFVTFLLPAGWILS. Residues 61 to 69 lie on the Mitochondrial intermembrane side of the membrane; that stretch reads HLETYRRPE.

It belongs to the cytochrome c oxidase VIII family. In terms of assembly, component of the cytochrome c oxidase (complex IV, CIV), a multisubunit enzyme composed of 14 subunits. The complex is composed of a catalytic core of 3 subunits MT-CO1, MT-CO2 and MT-CO3, encoded in the mitochondrial DNA, and 11 supernumerary subunits COX4I, COX5A, COX5B, COX6A, COX6B, COX6C, COX7A, COX7B, COX7C, COX8 and NDUFA4, which are encoded in the nuclear genome. The complex exists as a monomer or a dimer and forms supercomplexes (SCs) in the inner mitochondrial membrane with NADH-ubiquinone oxidoreductase (complex I, CI) and ubiquinol-cytochrome c oxidoreductase (cytochrome b-c1 complex, complex III, CIII), resulting in different assemblies (supercomplex SCI(1)III(2)IV(1) and megacomplex MCI(2)III(2)IV(2)). Post-translationally, in response to mitochondrial stress, the precursor protein is ubiquitinated by the SIFI complex in the cytoplasm before mitochondrial import, leading to its degradation. Within the SIFI complex, UBR4 initiates ubiquitin chain that are further elongated or branched by KCMF1.

Its subcellular location is the mitochondrion inner membrane. Its pathway is energy metabolism; oxidative phosphorylation. In terms of biological role, component of the cytochrome c oxidase, the last enzyme in the mitochondrial electron transport chain which drives oxidative phosphorylation. The respiratory chain contains 3 multisubunit complexes succinate dehydrogenase (complex II, CII), ubiquinol-cytochrome c oxidoreductase (cytochrome b-c1 complex, complex III, CIII) and cytochrome c oxidase (complex IV, CIV), that cooperate to transfer electrons derived from NADH and succinate to molecular oxygen, creating an electrochemical gradient over the inner membrane that drives transmembrane transport and the ATP synthase. Cytochrome c oxidase is the component of the respiratory chain that catalyzes the reduction of oxygen to water. Electrons originating from reduced cytochrome c in the intermembrane space (IMS) are transferred via the dinuclear copper A center (CU(A)) of subunit 2 and heme A of subunit 1 to the active site in subunit 1, a binuclear center (BNC) formed by heme A3 and copper B (CU(B)). The BNC reduces molecular oxygen to 2 water molecules using 4 electrons from cytochrome c in the IMS and 4 protons from the mitochondrial matrix. The protein is Cytochrome c oxidase subunit 8A, mitochondrial (COX8A) of Gorilla gorilla gorilla (Western lowland gorilla).